We begin with the raw amino-acid sequence, 247 residues long: 1-(5-phosphoribosyl)-5-[(5-phosphoribosylamino)methylideneamino] imidazole-4-carboxamide isomerase (247 aa).

The active-site Proton acceptor is aspartate 8. The Proton donor role is filled by aspartate 130.

Belongs to the HisA/HisF family.

It is found in the cytoplasm. The enzyme catalyses 1-(5-phospho-beta-D-ribosyl)-5-[(5-phospho-beta-D-ribosylamino)methylideneamino]imidazole-4-carboxamide = 5-[(5-phospho-1-deoxy-D-ribulos-1-ylimino)methylamino]-1-(5-phospho-beta-D-ribosyl)imidazole-4-carboxamide. It functions in the pathway amino-acid biosynthesis; L-histidine biosynthesis; L-histidine from 5-phospho-alpha-D-ribose 1-diphosphate: step 4/9. The chain is 1-(5-phosphoribosyl)-5-[(5-phosphoribosylamino)methylideneamino] imidazole-4-carboxamide isomerase from Leptospira biflexa serovar Patoc (strain Patoc 1 / Ames).